The following is a 431-amino-acid chain: Islet cell autoantigen 1-like protein (431 aa).

Residues 44 to 247 enclose the AH domain; sequence ASDAELDAKL…TAQMMTQIQE (204 aa). 2 disordered regions span residues 295–316 and 351–372; these read EEEEEERFEREPAVARALPRDS and CGSPCTGLTSQEPSVGPGSLTS. Residues 301-316 show a composition bias toward basic and acidic residues; the sequence is RFEREPAVARALPRDS. Polar residues predominate over residues 356–372; it reads TGLTSQEPSVGPGSLTS.

The protein is Islet cell autoantigen 1-like protein (Ica1l) of Mus musculus (Mouse).